A 336-amino-acid chain; its full sequence is Atypical chemokine receptor 1 (336 aa).

Topologically, residues 1-63 are extracellular; that stretch reads MGNCLHQAEL…CNLLDDSSLP (63 aa). N-linked (GlcNAc...) asparagine glycans are attached at residues Asn16, Asn27, and Asn33. 2 disulfides stabilise this stretch: Cys51–Cys276 and Cys129–Cys195. A helical transmembrane segment spans residues 64–84; that stretch reads FFILASVLGILASSTVLFLLF. The Cytoplasmic segment spans residues 85–95; that stretch reads RPLFRWQLCPG. A helical transmembrane segment spans residues 96 to 116; sequence WPVLAQLAVGSTLFSIVVPIL. The Extracellular segment spans residues 117-129; that stretch reads APGLGNTRSSAPC. Residues 130–153 form a helical membrane-spanning segment; that stretch reads SLGYCVWYGSAFAQALLLGCHASL. Over 154–166 the chain is Cytoplasmic; that stretch reads GPKLGAGQVPGLT. The helical transmembrane segment at 167–187 threads the bilayer; that stretch reads LGLSVGLWGAAALLTLPITLA. Over 188 to 207 the chain is Extracellular; that stretch reads SDASDGLCTPIYSTELKALQ. Residues 208-228 traverse the membrane as a helical segment; the sequence is ATHTVACFAIFVLLPLGLFGA. At 229 to 244 the chain is on the cytoplasmic side; sequence KGLKKVLGMGPGPWMN. A helical transmembrane segment spans residues 245–265; that stretch reads ILWVWFIFWWPHGVVLGLDFL. Over 266 to 287 the chain is Extracellular; the sequence is VRSKLLLLPTCLAQQVLDLLLN. A helical membrane pass occupies residues 288 to 308; that stretch reads LAEALAIVHCVATPLLLALFC. The Cytoplasmic segment spans residues 309 to 336; that stretch reads HQATRTLVPSLPLPERWSSPVDTLGSKS.

This sequence belongs to the G-protein coupled receptor 1 family. Atypical chemokine receptor subfamily.

The protein localises to the early endosome. Its subcellular location is the recycling endosome. It is found in the membrane. In terms of biological role, atypical chemokine receptor that controls chemokine levels and localization via high-affinity chemokine binding that is uncoupled from classic ligand-driven signal transduction cascades, resulting instead in chemokine sequestration, degradation, or transcytosis. Also known as interceptor (internalizing receptor) or chemokine-scavenging receptor or chemokine decoy receptor. Has a promiscuous chemokine-binding profile, interacting with inflammatory chemokines of both the CXC and the CC subfamilies but not with homeostatic chemokines. Acts as a receptor for chemokines including CCL2, CCL5, CCL7, CCL11, CCL13, CCL14, CCL17, CXCL5, CXCL6, IL8/CXCL8, CXCL11, GRO, RANTES, MCP-1 and TARC. May regulate chemokine bioavailability and, consequently, leukocyte recruitment through two distinct mechanisms: when expressed in endothelial cells, it sustains the abluminal to luminal transcytosis of tissue-derived chemokines and their subsequent presentation to circulating leukocytes; when expressed in erythrocytes, serves as blood reservoir of cognate chemokines but also as a chemokine sink, buffering potential surges in plasma chemokine levels. The sequence is that of Atypical chemokine receptor 1 (ACKR1) from Saguinus imperator (Emperor tamarin).